The following is a 28-amino-acid chain: leu operon leader peptide (28 aa).

Involved in control of the biosynthesis of leucine. The polypeptide is leu operon leader peptide (leuL) (Salmonella typhi).